The chain runs to 156 residues: ATP synthase subunit b (156 aa).

Residues 11 to 31 (AIAFILFVAFCMKYVWPPLMA) form a helical membrane-spanning segment.

It belongs to the ATPase B chain family. In terms of assembly, F-type ATPases have 2 components, F(1) - the catalytic core - and F(0) - the membrane proton channel. F(1) has five subunits: alpha(3), beta(3), gamma(1), delta(1), epsilon(1). F(0) has three main subunits: a(1), b(2) and c(10-14). The alpha and beta chains form an alternating ring which encloses part of the gamma chain. F(1) is attached to F(0) by a central stalk formed by the gamma and epsilon chains, while a peripheral stalk is formed by the delta and b chains.

The protein localises to the cell inner membrane. In terms of biological role, f(1)F(0) ATP synthase produces ATP from ADP in the presence of a proton or sodium gradient. F-type ATPases consist of two structural domains, F(1) containing the extramembraneous catalytic core and F(0) containing the membrane proton channel, linked together by a central stalk and a peripheral stalk. During catalysis, ATP synthesis in the catalytic domain of F(1) is coupled via a rotary mechanism of the central stalk subunits to proton translocation. Component of the F(0) channel, it forms part of the peripheral stalk, linking F(1) to F(0). This Erwinia tasmaniensis (strain DSM 17950 / CFBP 7177 / CIP 109463 / NCPPB 4357 / Et1/99) protein is ATP synthase subunit b.